Reading from the N-terminus, the 380-residue chain is Protein COS12 (380 aa).

Topologically, residues 1-70 are cytoplasmic; the sequence is MDGAKFENTV…WKIRGKRHYL (70 aa). The helical transmembrane segment at 71–91 threads the bilayer; the sequence is VIVTALMFEVLYFLWTYSYIF. At 92 to 231 the chain is on the extracellular side; it reads RERTLGKQVS…KLLWAFKEVT (140 aa). A helical transmembrane segment spans residues 232-252; sequence IMNSRFAFFSIAYLNGLLTIP. Topologically, residues 253-257 are cytoplasmic; that stretch reads RLRNS. Residues 258–278 form a helical membrane-spanning segment; the sequence is LHILYVCAVLSSMIIEYLIGI. The Extracellular portion of the chain corresponds to 279–380; it reads DKFRFKSMNL…KEAQSACNDV (102 aa).

The protein belongs to the DUP/COS family.

The protein resides in the membrane. The chain is Protein COS12 (COS12) from Saccharomyces cerevisiae (strain ATCC 204508 / S288c) (Baker's yeast).